We begin with the raw amino-acid sequence, 245 residues long: 3-deoxy-manno-octulosonate cytidylyltransferase (245 aa).

Belongs to the KdsB family.

Its subcellular location is the cytoplasm. The enzyme catalyses 3-deoxy-alpha-D-manno-oct-2-ulosonate + CTP = CMP-3-deoxy-beta-D-manno-octulosonate + diphosphate. It participates in nucleotide-sugar biosynthesis; CMP-3-deoxy-D-manno-octulosonate biosynthesis; CMP-3-deoxy-D-manno-octulosonate from 3-deoxy-D-manno-octulosonate and CTP: step 1/1. It functions in the pathway bacterial outer membrane biogenesis; lipopolysaccharide biosynthesis. Functionally, activates KDO (a required 8-carbon sugar) for incorporation into bacterial lipopolysaccharide in Gram-negative bacteria. This is 3-deoxy-manno-octulosonate cytidylyltransferase from Elusimicrobium minutum (strain Pei191).